Reading from the N-terminus, the 244-residue chain is Small ribosomal subunit protein eS4 (244 aa).

The 64-residue stretch at 43–106 (LPLLLVVRDV…DENYLVLFDE (64 aa)) folds into the S4 RNA-binding domain.

The protein belongs to the eukaryotic ribosomal protein eS4 family.

The sequence is that of Small ribosomal subunit protein eS4 from Methanococcus maripaludis (strain C7 / ATCC BAA-1331).